A 124-amino-acid polypeptide reads, in one-letter code: Large ribosomal subunit protein bL19 (124 aa).

This sequence belongs to the bacterial ribosomal protein bL19 family.

This protein is located at the 30S-50S ribosomal subunit interface and may play a role in the structure and function of the aminoacyl-tRNA binding site. The sequence is that of Large ribosomal subunit protein bL19 from Zymomonas mobilis subsp. mobilis (strain ATCC 31821 / ZM4 / CP4).